The following is a 154-amino-acid chain: Protein X (154 aa).

Residues 68–117 are mitochondrial targeting sequence; that stretch reads PCALRFTSARYMETAMNTSHHLPRQLYKWTLGLFVMSTTGVEKYFKDCVF.

This sequence belongs to the orthohepadnavirus protein X family. May form homodimer. May interact with host CEBPA, CFLAR, CREB1, DDB1, E4F1, HBXIP, HSPD1/HSP60, NFKBIA, POLR2E and SMAD4. Interacts with host SMC5-SMC6 complex and induces its degradation. Interacts with host TRPC4AP; leading to prevent ubiquitination of TRPC4AP. Interacts with host PLSCR1; this interaction promotes ubiquitination and degradation of HBx and impairs HBx-mediated cell proliferation. A fraction may be phosphorylated in insect cells and HepG2 cells, a human hepatoblastoma cell line. Phosphorylated in vitro by host protein kinase C or mitogen-activated protein kinase. N-acetylated in insect cells.

Its subcellular location is the host cytoplasm. It localises to the host nucleus. The protein localises to the host mitochondrion. In terms of biological role, multifunctional protein that plays a role in silencing host antiviral defenses and promoting viral transcription. Does not seem to be essential for HBV infection. May be directly involved in development of cirrhosis and liver cancer (hepatocellular carcinoma). Most of cytosolic activities involve modulation of cytosolic calcium. The effect on apoptosis is controversial depending on the cell types in which the studies have been conducted. May induce apoptosis by localizing in mitochondria and causing loss of mitochondrial membrane potential. May also modulate apoptosis by binding host CFLAR, a key regulator of the death-inducing signaling complex (DISC). Promotes viral transcription by using the host E3 ubiquitin ligase DDB1 to target the SMC5-SMC6 complex to proteasomal degradation. This host complex would otherwise bind to viral episomal DNA, and prevents its transcription. Moderately stimulates transcription of many different viral and cellular transcription elements. Promoters and enhancers stimulated by HBx contain DNA binding sites for NF-kappa-B, AP-1, AP-2, c-EBP, ATF/CREB, or the calcium-activated factor NF-AT. This chain is Protein X, found in Hepatitis B virus genotype G (isolate IG29227/2000) (HBV-G).